We begin with the raw amino-acid sequence, 216 residues long: Molybdenum cofactor guanylyltransferase (216 aa).

GTP contacts are provided by residues 16-18 (LAG), Lys-28, Asn-57, Asp-73, and Asp-108. Residue Asp-108 coordinates Mg(2+).

Belongs to the MobA family. In terms of assembly, monomer. Mg(2+) serves as cofactor.

It is found in the cytoplasm. The enzyme catalyses Mo-molybdopterin + GTP + H(+) = Mo-molybdopterin guanine dinucleotide + diphosphate. Functionally, transfers a GMP moiety from GTP to Mo-molybdopterin (Mo-MPT) cofactor (Moco or molybdenum cofactor) to form Mo-molybdopterin guanine dinucleotide (Mo-MGD) cofactor. The sequence is that of Molybdenum cofactor guanylyltransferase from Rhizobium rhizogenes (strain K84 / ATCC BAA-868) (Agrobacterium radiobacter).